The following is a 251-amino-acid chain: Small ribosomal subunit protein uS2 (251 aa).

The tract at residues Glu-232 to Asp-251 is disordered.

It belongs to the universal ribosomal protein uS2 family.

The chain is Small ribosomal subunit protein uS2 from Chlorobaculum parvum (strain DSM 263 / NCIMB 8327) (Chlorobium vibrioforme subsp. thiosulfatophilum).